We begin with the raw amino-acid sequence, 622 residues long: Solute carrier family 2, facilitated glucose transporter member 12 (622 aa).

The segment at 1–26 (MVPVENTEGPNLLNQKGREAETEGSC) is disordered. At 1 to 44 (MVPVENTEGPNLLNQKGREAETEGSCGASGGGHPACAGGPSMFT) the chain is on the cytoplasmic side. Residues 45 to 65 (FLTSVTAAISGLLVGYELGLI) traverse the membrane as a helical segment. Residues 66–84 (SGALLQIRTLLALTCHEQE) lie on the Extracellular side of the membrane. The chain crosses the membrane as a helical span at residues 85–105 (MVVSSLLIGAFLASLTGGVLI). At 106–111 (DRYGRR) the chain is on the cytoplasmic side. Residues 112–132 (LAIILSSCLLGLGSLVLIMSL) traverse the membrane as a helical segment. At 133 to 141 (SYTLLIMGR) the chain is on the extracellular side. The chain crosses the membrane as a helical span at residues 142–162 (VAIGVSISLSSIATCVYIAEI). The Cytoplasmic portion of the chain corresponds to 163–168 (APQHRR). A helical transmembrane segment spans residues 169 to 189 (GLLVSLNELMIVTGILFAYIS). Residues 190–201 (NYAFANISNGWK) are Extracellular-facing. Asn195 carries an N-linked (GlcNAc...) asparagine glycan. Residues 202–222 (YMFGLVIPLGVLQAIAMYFLP) form a helical membrane-spanning segment. Topologically, residues 223–282 (PSPRFLVMKGQEESAGKVLRKLRVISDTTEELTLIKSSLKDEYQYSFWDLFRSKDNMRTR) are cytoplasmic. A helical transmembrane segment spans residues 283 to 303 (ILIGLTLVFFVQTTGQPNILF). The Extracellular portion of the chain corresponds to 304 to 321 (YASTVLKSVGFQSNEAAS). The chain crosses the membrane as a helical span at residues 322 to 342 (LASTGVGVVKVVSTIPATLLV). Residues 343-349 (DHIGSKT) lie on the Cytoplasmic side of the membrane. The helical transmembrane segment at 350 to 370 (FLCIGSSVMSASLLTMGIVNL) threads the bilayer. Over 371-471 (NINMNFTNIC…PAAYKWLSLA (101 aa)) the chain is Extracellular. N-linked (GlcNAc...) asparagine glycans are attached at residues Asn375, Asn387, Asn400, and Asn405. The chain crosses the membrane as a helical span at residues 472-492 (SLLVYVAAFSIGLGPMPWLVL). The Cytoplasmic segment spans residues 493 to 503 (SEIFPGGIRGR). A helical membrane pass occupies residues 504-524 (AMALTSSMNWGVNLLISLTFL). Over 525-533 (TVTDLIGLS) the chain is Extracellular. A helical membrane pass occupies residues 534–554 (WVCFIYTIMSLASLAFVVLFI). Residues 555–622 (PETKGCSLEQ…GQSQRPSPDT (68 aa)) are Cytoplasmic-facing.

Belongs to the major facilitator superfamily. Sugar transporter (TC 2.A.1.1) family. Glucose transporter subfamily. As to expression, expressed in skeletal muscle, heart, brain, kidney, spleen, adipose tissues and to a lesser extent in small intestine and lung.

The protein localises to the cell membrane. The protein resides in the endomembrane system. It is found in the cytoplasm. It localises to the perinuclear region. The catalysed reaction is D-glucose(out) = D-glucose(in). Its function is as follows. Insulin-independent facilitative glucose transporter. The sequence is that of Solute carrier family 2, facilitated glucose transporter member 12 from Mus musculus (Mouse).